Consider the following 745-residue polypeptide: ATP-dependent zinc metalloprotease FtsH (745 aa).

The Cytoplasmic portion of the chain corresponds to 1 to 11 (MNNRRNGLFRN). Residues 12-32 (SLFYILMFLSLMGIIYFFFGG) form a helical membrane-spanning segment. Topologically, residues 33-131 (NSGSQTQNIR…VTAKAEESSG (99 aa)) are extracellular. A helical membrane pass occupies residues 132–152 (IWVTLLMYIAPVILMLFLFYM). Over 153–745 (MMGQAGQGGG…SSQDDTNSQA (593 aa)) the chain is Cytoplasmic. 227–234 (GPPGTGKT) provides a ligand contact to ATP. Position 449 (His449) interacts with Zn(2+). Residue Glu450 is part of the active site. Residues His453 and Asp525 each contribute to the Zn(2+) site. Positions 630 to 673 (MPEKDSNEFPSEKAATFEESKRELERREAEKHAQNQSADDKQAD) are enriched in basic and acidic residues. Residues 630–745 (MPEKDSNEFP…SSQDDTNSQA (116 aa)) form a disordered region. The segment covering 690–704 (SESDASSEVSADSSV) has biased composition (low complexity). Polar residues predominate over residues 705-745 (NSTANSATESATDSDVATSATGLPNAESATPSSQDDTNSQA).

The protein in the central section; belongs to the AAA ATPase family. It in the C-terminal section; belongs to the peptidase M41 family. As to quaternary structure, homohexamer. It depends on Zn(2+) as a cofactor.

Its subcellular location is the cell membrane. Acts as a processive, ATP-dependent zinc metallopeptidase for both cytoplasmic and membrane proteins. Plays a role in the quality control of integral membrane proteins. The sequence is that of ATP-dependent zinc metalloprotease FtsH from Lactiplantibacillus plantarum (strain ATCC BAA-793 / NCIMB 8826 / WCFS1) (Lactobacillus plantarum).